The sequence spans 406 residues: Acetylornithine/succinyldiaminopimelate aminotransferase (406 aa).

Pyridoxal 5'-phosphate is bound by residues Gly-108 to Thr-109 and Phe-141. Residue Arg-144 participates in N(2)-acetyl-L-ornithine binding. Asp-226 to Gln-229 is a pyridoxal 5'-phosphate binding site. Residue Lys-255 is modified to N6-(pyridoxal phosphate)lysine. N(2)-acetyl-L-ornithine is bound at residue Ser-283. Thr-284 is a binding site for pyridoxal 5'-phosphate.

It belongs to the class-III pyridoxal-phosphate-dependent aminotransferase family. ArgD subfamily. Homodimer. Pyridoxal 5'-phosphate serves as cofactor.

It is found in the cytoplasm. It catalyses the reaction N(2)-acetyl-L-ornithine + 2-oxoglutarate = N-acetyl-L-glutamate 5-semialdehyde + L-glutamate. The enzyme catalyses N-succinyl-(2S,6S)-2,6-diaminopimelate + 2-oxoglutarate = (S)-2-succinylamino-6-oxoheptanedioate + L-glutamate. The protein operates within amino-acid biosynthesis; L-arginine biosynthesis; N(2)-acetyl-L-ornithine from L-glutamate: step 4/4. Its pathway is amino-acid biosynthesis; L-lysine biosynthesis via DAP pathway; LL-2,6-diaminopimelate from (S)-tetrahydrodipicolinate (succinylase route): step 2/3. Functionally, involved in both the arginine and lysine biosynthetic pathways. In Escherichia coli O157:H7, this protein is Acetylornithine/succinyldiaminopimelate aminotransferase.